The following is a 216-amino-acid chain: 3-isopropylmalate dehydratase small subunit (216 aa).

It belongs to the LeuD family. LeuD type 1 subfamily. In terms of assembly, heterodimer of LeuC and LeuD.

It carries out the reaction (2R,3S)-3-isopropylmalate = (2S)-2-isopropylmalate. It functions in the pathway amino-acid biosynthesis; L-leucine biosynthesis; L-leucine from 3-methyl-2-oxobutanoate: step 2/4. Catalyzes the isomerization between 2-isopropylmalate and 3-isopropylmalate, via the formation of 2-isopropylmaleate. This chain is 3-isopropylmalate dehydratase small subunit, found in Methylibium petroleiphilum (strain ATCC BAA-1232 / LMG 22953 / PM1).